Here is a 404-residue protein sequence, read N- to C-terminus: Formate-dependent phosphoribosylglycinamide formyltransferase (404 aa).

N(1)-(5-phospho-beta-D-ribosyl)glycinamide is bound by residues 25–26 (EL) and E85. ATP-binding positions include R118, K159, 164-169 (SSGKGQ), 199-202 (EGFV), and E207. The ATP-grasp domain maps to 123 to 318 (RLAAEELGLP…EFELHARAIL (196 aa)). Positions 277 and 289 each coordinate Mg(2+). N(1)-(5-phospho-beta-D-ribosyl)glycinamide-binding positions include D296, K365, and 372-373 (RR).

It belongs to the PurK/PurT family. Homodimer.

The enzyme catalyses N(1)-(5-phospho-beta-D-ribosyl)glycinamide + formate + ATP = N(2)-formyl-N(1)-(5-phospho-beta-D-ribosyl)glycinamide + ADP + phosphate + H(+). The protein operates within purine metabolism; IMP biosynthesis via de novo pathway; N(2)-formyl-N(1)-(5-phospho-D-ribosyl)glycinamide from N(1)-(5-phospho-D-ribosyl)glycinamide (formate route): step 1/1. Involved in the de novo purine biosynthesis. Catalyzes the transfer of formate to 5-phospho-ribosyl-glycinamide (GAR), producing 5-phospho-ribosyl-N-formylglycinamide (FGAR). Formate is provided by PurU via hydrolysis of 10-formyl-tetrahydrofolate. The sequence is that of Formate-dependent phosphoribosylglycinamide formyltransferase from Burkholderia cenocepacia (strain HI2424).